A 107-amino-acid polypeptide reads, in one-letter code: Protein Rev (107 aa).

Phosphoserine; by host CK2 occurs at positions 5 and 8. The segment at 18-26 is homomultimerization; that stretch reads IIKILYQSN. Disordered stretches follow at residues 26-48 and 81-107; these read NPYP…WRAR and LNLD…VGNP. The Nuclear localization signal and RNA-binding (RRE) motif lies at 34–50; the sequence is TRQARRNRRRRWRARQR. Over residues 36–48 the composition is skewed to basic residues; it reads QARRNRRRRWRAR. The Nuclear export signal and binding to XPO1 motif lies at 73-84; sequence LQLPPLERLNLD. Positions 89 to 101 are enriched in low complexity; that stretch reads SGTSGTQQSQGTT. Residue serine 92 is modified to Phosphoserine; by host.

The protein belongs to the HIV-1 REV protein family. Homomultimer; when bound to the RRE. Multimeric assembly is essential for activity and may involve XPO1. Binds to human KPNB1, XPO1, TNPO1, RANBP5 and IPO7. Interacts with the viral Integrase. Interacts with human KHDRBS1. Interacts with human NAP1; this interaction decreases Rev multimerization and stimulates its activity. Interacts with human DEAD-box helicases DDX3 and DDX24; these interactions may serve for viral RNA export to the cytoplasm and packaging, respectively. Interacts with human PSIP1; this interaction may inhibit HIV-1 DNA integration by promoting dissociation of the Integrase-LEDGF/p75 complex. Asymmetrically arginine dimethylated at one site by host PRMT6. Methylation impairs the RNA-binding activity and export of viral RNA from the nucleus to the cytoplasm. In terms of processing, phosphorylated by protein kinase CK2. Presence of, and maybe binding to the N-terminus of the regulatory beta subunit of CK2 is necessary for CK2-mediated Rev's phosphorylation.

Its subcellular location is the host nucleus. It is found in the host nucleolus. The protein resides in the host cytoplasm. In terms of biological role, escorts unspliced or incompletely spliced viral pre-mRNAs (late transcripts) out of the nucleus of infected cells. These pre-mRNAs carry a recognition sequence called Rev responsive element (RRE) located in the env gene, that is not present in fully spliced viral mRNAs (early transcripts). This function is essential since most viral proteins are translated from unspliced or partially spliced pre-mRNAs which cannot exit the nucleus by the pathway used by fully processed cellular mRNAs. Rev itself is translated from a fully spliced mRNA that readily exits the nucleus. Rev's nuclear localization signal (NLS) binds directly to KPNB1/Importin beta-1 without previous binding to KPNA1/Importin alpha-1. KPNB1 binds to the GDP bound form of RAN (Ran-GDP) and targets Rev to the nucleus. In the nucleus, the conversion from Ran-GDP to Ran-GTP dissociates Rev from KPNB1 and allows Rev's binding to the RRE in viral pre-mRNAs. Rev multimerization on the RRE via cooperative assembly exposes its nuclear export signal (NES) to the surface. Rev can then form a complex with XPO1/CRM1 and Ran-GTP, leading to nuclear export of the complex. Conversion from Ran-GTP to Ran-GDP mediates dissociation of the Rev/RRE/XPO1/RAN complex, so that Rev can return to the nucleus for a subsequent round of export. Beside KPNB1, also seems to interact with TNPO1/Transportin-1, RANBP5/IPO5 and IPO7/RANBP7 for nuclear import. The nucleoporin-like HRB/RIP is an essential cofactor that probably indirectly interacts with Rev to release HIV RNAs from the perinuclear region to the cytoplasm. This chain is Protein Rev, found in Homo sapiens (Human).